A 132-amino-acid polypeptide reads, in one-letter code: Histone H2B.9 (132 aa).

Residues Met-1–Glu-11 are compositionally biased toward basic and acidic residues. A disordered region spans residues Met-1–Ser-41. Position 2 is a n,N,N-trimethylalanine; alternate (Ala-2). Ala-2 is modified (n,N-dimethylalanine; alternate). An N-methylalanine; alternate modification is found at Ala-2. Lys-4 bears the N6-methyllysine mark. Residues Lys-7, Lys-12, Lys-20, and Lys-21 each carry the N6-acetyllysine modification. A Glycyl lysine isopeptide (Lys-Gly) (interchain with G-Cter in ubiquitin) cross-link involves residue Lys-128.

This sequence belongs to the histone H2B family. The nucleosome is a histone octamer containing two molecules each of H2A, H2B, H3 and H4 assembled in one H3-H4 heterotetramer and two H2A-H2B heterodimers. The octamer wraps approximately 147 bp of DNA. Can be acetylated to form H2BK6ac, H2BK33ac and H2BK34ac. In terms of processing, monoubiquitinated by BRE1 to form H2BK143ub1 and deubiquitinated by UBP26. Required for heterochromatic histone H3 di- and trimethylation at H3K4me. May give a specific tag for epigenetic transcriptional activation.

Its subcellular location is the nucleus. It localises to the chromosome. Functionally, core component of nucleosome. Nucleosomes wrap and compact DNA into chromatin, limiting DNA accessibility to the cellular machineries which require DNA as a template. Histones thereby play a central role in transcription regulation, DNA repair, DNA replication and chromosomal stability. DNA accessibility is regulated via a complex set of post-translational modifications of histones, also called histone code, and nucleosome remodeling. This chain is Histone H2B.9, found in Arabidopsis thaliana (Mouse-ear cress).